We begin with the raw amino-acid sequence, 484 residues long: Falcipain-2a (484 aa).

Residues 1–35 (MDYNMDYAPHEVISQQGERFVDKYVDRKILKNKKS) are Cytoplasmic-facing. The propeptide at 1 to 243 (MDYNMDYAPH…PLKNSKYLLD (243 aa)) is activation peptide. The Bipartite vacuolar targeting signal 1 signature appears at 16-25 (QGERFVDKYV). A helical; Signal-anchor for type II membrane protein membrane pass occupies residues 36–56 (LLVIISLSVLSVVGFVLFYFT). At 57-484 (PNSRKSDLFK…GTDAFIPLIE (428 aa)) the chain is on the lumenal side. The N-linked (GlcNAc...) asparagine glycan is linked to asparagine 67. A Bipartite vacuolar targeting signal 2 motif is present at residues 84 to 105 (KSPNGKKFIVSKIDEALSFYDS). The short motif at 244 to 260 (QMNYEEVIKKYKGNENF) is the Nose motif; required for the correct folding of the mature form element. 4 disulfide bridges follow: cysteine 282–cysteine 323, cysteine 316–cysteine 357, cysteine 342–cysteine 362, and cysteine 411–cysteine 472. Residue cysteine 285 is part of the active site. The active site involves histidine 417. An Arm motif; binds to host hemoglobin and required for the inhibitory interaction between the propeptide and the catalytic domain motif is present at residues 428–437 (EIVNPLTKKG). Asparagine 447 is an active-site residue.

The protein belongs to the peptidase C1 family. As to quaternary structure, component of the hemozoin formation complex (HFC) composed of falcipains FP2A and/or FP2B, plasmepsins PMII, PMIII/HAP and PMIV, heme detoxifying protein HDP and falcilysin FLN. The HFC complex is involved in hemoglobin degradation and detoxification of heme in the food vacuole during the asexual blood stage. Auto-cleaved to remove the propeptide.

It is found in the vacuole. It localises to the membrane. Its activity is regulated as follows. Inhibited by cysteine protease inhibitor ICP. Inhibited by heme and heme analogs. Functionally, cysteine protease which cleaves native host hemoglobin and globin in the food vacuole during the asexual blood stage. The binding to host hemoglobin is pH-sensitive and only occurs at acidic pH. Cleaves ankyrin and protein 4.1, two components of host erythrocyte membrane cytoskeleton required for the stability of the erythrocyte membrane, and thus may be involved in parasite release. Preferentially cleaves substrates which have an arginine or lysine at the P1 position and a leucine or phenylalanine at the P2 position. The chain is Falcipain-2a from Plasmodium falciparum (isolate 3D7).